The following is a 20-amino-acid chain: Poneritoxin (20 aa).

At Met-18 the chain carries Methionine sulfoxide; in form U1-PONTX-Dq3c. Lys-19 carries the lysine amide; in form U1-PONTX-Dq3a and U1-PONTX-Dq3c modification.

In terms of processing, the peptide spanning residues 2 to 19 occurs in 3 forms and has been given 3 different names. U1-PONTX-Dq3a has an amidated Lys-19, U1-PONTX-Dq3c has an amidated Lys-19 and an oxidized Met-18, and U1-PONTX-Dq3b has no modifications at either Met-18 or Lys-19. In terms of tissue distribution, expressed by the venom gland.

It is found in the secreted. Its function is as follows. May have antimicrobial properties, like most ant linear peptides. This Dinoponera quadriceps (South American ant) protein is Poneritoxin.